The primary structure comprises 401 residues: Dual-specificity RNA methyltransferase RlmN (401 aa).

Glu-114 serves as the catalytic Proton acceptor. One can recognise a Radical SAM core domain in the interval 120-365; the sequence is DKGRGTLCVS…TMVRRTRGDD (246 aa). Cys-127 and Cys-370 form a disulfide bridge. [4Fe-4S] cluster-binding residues include Cys-134, Cys-138, and Cys-141. S-adenosyl-L-methionine contacts are provided by residues 187–188, Ser-219, 241–243, and Asn-327; these read GE and SLH. The active-site S-methylcysteine intermediate is Cys-370.

Belongs to the radical SAM superfamily. RlmN family. Requires [4Fe-4S] cluster as cofactor.

The protein resides in the cytoplasm. It catalyses the reaction adenosine(2503) in 23S rRNA + 2 reduced [2Fe-2S]-[ferredoxin] + 2 S-adenosyl-L-methionine = 2-methyladenosine(2503) in 23S rRNA + 5'-deoxyadenosine + L-methionine + 2 oxidized [2Fe-2S]-[ferredoxin] + S-adenosyl-L-homocysteine. The catalysed reaction is adenosine(37) in tRNA + 2 reduced [2Fe-2S]-[ferredoxin] + 2 S-adenosyl-L-methionine = 2-methyladenosine(37) in tRNA + 5'-deoxyadenosine + L-methionine + 2 oxidized [2Fe-2S]-[ferredoxin] + S-adenosyl-L-homocysteine. Specifically methylates position 2 of adenine 2503 in 23S rRNA and position 2 of adenine 37 in tRNAs. m2A2503 modification seems to play a crucial role in the proofreading step occurring at the peptidyl transferase center and thus would serve to optimize ribosomal fidelity. The protein is Dual-specificity RNA methyltransferase RlmN of Xanthomonas campestris pv. campestris (strain 8004).